Consider the following 146-residue polypeptide: Cystatin-C (146 aa).

The first 26 residues, 1–26 (MAGPLRAPLLLLAILAVALAVSPAAG), serve as a signal peptide directing secretion. Ser43 is subject to Phosphoserine; by FAM20C. The Secondary area of contact motif lies at 81–85 (QIVAG). 2 disulfide bridges follow: Cys99–Cys109 and Cys123–Cys143.

It belongs to the cystatin family. Homodimer. Post-translationally, the Thr-25 variant is O-glycosylated with a core 1 or possibly core 8 glycan. The signal peptide of the O-glycosylated Thr-25 variant is cleaved between Ala-20 and Val-21. As to expression, expressed in submandibular and sublingual saliva but not in parotid saliva (at protein level). Expressed in various body fluids, such as the cerebrospinal fluid and plasma. Expressed in highest levels in the epididymis, vas deferens, brain, thymus, and ovary and the lowest in the submandibular gland.

It localises to the secreted. Its function is as follows. As an inhibitor of cysteine proteinases, this protein is thought to serve an important physiological role as a local regulator of this enzyme activity. This Homo sapiens (Human) protein is Cystatin-C (CST3).